The sequence spans 265 residues: Acetylglutamate kinase (265 aa).

Substrate-binding positions include Gly-41 to Gly-42, Arg-63, and Asn-156.

Belongs to the acetylglutamate kinase family. ArgB subfamily.

The protein resides in the cytoplasm. It carries out the reaction N-acetyl-L-glutamate + ATP = N-acetyl-L-glutamyl 5-phosphate + ADP. The protein operates within amino-acid biosynthesis; L-arginine biosynthesis; N(2)-acetyl-L-ornithine from L-glutamate: step 2/4. In terms of biological role, catalyzes the ATP-dependent phosphorylation of N-acetyl-L-glutamate. The sequence is that of Acetylglutamate kinase from Brevibacillus brevis (strain 47 / JCM 6285 / NBRC 100599).